A 245-amino-acid polypeptide reads, in one-letter code: Thiopurine S-methyltransferase (245 aa).

A Phosphoserine modification is found at S14. Residue 29–40 (WQDKWVNGKTAF) coordinates S-adenosyl-L-methionine. Residue F40 coordinates substrate. K58 carries the N6-acetyllysine modification. S-adenosyl-L-methionine is bound by residues L69, E90, 134-135 (SI), and R152.

This sequence belongs to the class I-like SAM-binding methyltransferase superfamily. TPMT family. As to quaternary structure, monomer.

It localises to the cytoplasm. The enzyme catalyses S-adenosyl-L-methionine + a thiopurine = S-adenosyl-L-homocysteine + a thiopurine S-methylether.. This chain is Thiopurine S-methyltransferase (TPMT), found in Gorilla gorilla gorilla (Western lowland gorilla).